The chain runs to 172 residues: 3-hydroxydecanoyl-[acyl-carrier-protein] dehydratase (172 aa).

The active site involves His71.

It belongs to the thioester dehydratase family. FabA subfamily. Homodimer.

Its subcellular location is the cytoplasm. It carries out the reaction a (3R)-hydroxyacyl-[ACP] = a (2E)-enoyl-[ACP] + H2O. The enzyme catalyses (3R)-hydroxydecanoyl-[ACP] = (2E)-decenoyl-[ACP] + H2O. The catalysed reaction is (2E)-decenoyl-[ACP] = (3Z)-decenoyl-[ACP]. Its pathway is lipid metabolism; fatty acid biosynthesis. Its function is as follows. Necessary for the introduction of cis unsaturation into fatty acids. Catalyzes the dehydration of (3R)-3-hydroxydecanoyl-ACP to E-(2)-decenoyl-ACP and then its isomerization to Z-(3)-decenoyl-ACP. Can catalyze the dehydratase reaction for beta-hydroxyacyl-ACPs with saturated chain lengths up to 16:0, being most active on intermediate chain length. The polypeptide is 3-hydroxydecanoyl-[acyl-carrier-protein] dehydratase (Edwardsiella ictaluri (strain 93-146)).